The sequence spans 201 residues: Regulator of G-protein signaling 1 (201 aa).

The RGS domain maps to 75–191; it reads SLEKLLISED…LKSEIFLRLA (117 aa).

It is found in the cell membrane. The protein resides in the cytoplasm. The protein localises to the cytosol. Functionally, regulates G protein-coupled receptor signaling cascades, including signaling downstream of the N-formylpeptide chemoattractant receptors and leukotriene receptors. Inhibits B cell chemotaxis. Inhibits signal transduction by increasing the GTPase activity of G protein alpha subunits, thereby driving them into their inactive GDP-bound form. The sequence is that of Regulator of G-protein signaling 1 (rgs1) from Xenopus tropicalis (Western clawed frog).